The primary structure comprises 664 residues: DNA primase (664 aa).

The CHC2-type zinc-finger motif lies at 40 to 64 (CPFHKEKTPSFTVSPDKQFYYCFGC). The span at 94–104 (GMDVPREERGG) shows a compositional bias: basic and acidic residues. A disordered region spans residues 94 to 115 (GMDVPREERGGRGHTPRQPTDS). The Toprim domain occupies 262 to 344 (DEIMVVEGYM…GKRVRFLFLP (83 aa)). Positions 268, 312, and 314 each coordinate Mg(2+). The interval 483-521 (PRKSWNKDKKPWDGKKWDGKKKWDKGGRGDFKAPQRTPV) is disordered. The segment covering 487–515 (WNKDKKPWDGKKWDGKKKWDKGGRGDFKA) has biased composition (basic and acidic residues).

It belongs to the DnaG primase family. In terms of assembly, monomer. Interacts with DnaB. Zn(2+) is required as a cofactor. Requires Mg(2+) as cofactor.

It carries out the reaction ssDNA + n NTP = ssDNA/pppN(pN)n-1 hybrid + (n-1) diphosphate.. RNA polymerase that catalyzes the synthesis of short RNA molecules used as primers for DNA polymerase during DNA replication. The chain is DNA primase from Pseudomonas aeruginosa (strain ATCC 15692 / DSM 22644 / CIP 104116 / JCM 14847 / LMG 12228 / 1C / PRS 101 / PAO1).